The sequence spans 328 residues: Probable cell division protein WhiA (328 aa).

Positions 275 to 308 form a DNA-binding region, H-T-H motif; sequence SLEELGQLHDPVLTKDAIAGRIRRLLAMADKRAE.

The protein belongs to the WhiA family.

In terms of biological role, involved in cell division and chromosome segregation. This chain is Probable cell division protein WhiA, found in Nocardioides sp. (strain ATCC BAA-499 / JS614).